The chain runs to 407 residues: MSAVPLRNAKVAASGVRSVSVLGATGSIGDSTMDLLRASPERYQVEALTANTNVAGLAKLAREFNARFVAVADPARLSELRAALAGTGIACGAGDSAIVEAAERPADWVMAAVAGAAGLKPTLAAVDRGAHVALANKECLVCAGEFFMDRAAKAGATILPADSEHNALFQALASGNRDELTKVIITASGGPFRTWAAADIEQATLAQALKHPNWSMGQKITIDSASMMNKGLEVIEASWLFALSPDEIDVVVHPQSIIHGMVEFSDRSVVAQLGSPDMRTPIAHCLGWPDRIVGRAAPLDLAKIGTLTFEAPDYARFPGLKLAYEALRAGNGATTVYNAANEVAVAAFIAQRIRFGAIARLVEETMSSWIRAGNQAPLSCADDAIAVDHSARNMAAALLPQIAAKAS.

NADPH is bound by residues threonine 25, glycine 26, serine 27, isoleucine 28, asparagine 53, and asparagine 136. Lysine 137 is a 1-deoxy-D-xylulose 5-phosphate binding site. Glutamate 138 provides a ligand contact to NADPH. Aspartate 162 is a binding site for Mn(2+). 4 residues coordinate 1-deoxy-D-xylulose 5-phosphate: serine 163, glutamate 164, serine 188, and histidine 211. Mn(2+) is bound at residue glutamate 164. Position 217 (glycine 217) interacts with NADPH. 1-deoxy-D-xylulose 5-phosphate-binding residues include serine 224, asparagine 229, lysine 230, and glutamate 233. Glutamate 233 lines the Mn(2+) pocket.

Belongs to the DXR family. The cofactor is Mg(2+). Mn(2+) is required as a cofactor.

It carries out the reaction 2-C-methyl-D-erythritol 4-phosphate + NADP(+) = 1-deoxy-D-xylulose 5-phosphate + NADPH + H(+). It participates in isoprenoid biosynthesis; isopentenyl diphosphate biosynthesis via DXP pathway; isopentenyl diphosphate from 1-deoxy-D-xylulose 5-phosphate: step 1/6. Its function is as follows. Catalyzes the NADPH-dependent rearrangement and reduction of 1-deoxy-D-xylulose-5-phosphate (DXP) to 2-C-methyl-D-erythritol 4-phosphate (MEP). The chain is 1-deoxy-D-xylulose 5-phosphate reductoisomerase from Rhodopseudomonas palustris (strain BisB18).